Consider the following 506-residue polypeptide: Cobyric acid synthase (506 aa).

A GATase cobBQ-type domain is found at 251 to 448; it reads DITIAIVQLP…LHGLFDSDAF (198 aa). Cys332 (nucleophile) is an active-site residue. His440 is a catalytic residue.

The protein belongs to the CobB/CobQ family. CobQ subfamily.

Its pathway is cofactor biosynthesis; adenosylcobalamin biosynthesis. Its function is as follows. Catalyzes amidations at positions B, D, E, and G on adenosylcobyrinic A,C-diamide. NH(2) groups are provided by glutamine, and one molecule of ATP is hydrogenolyzed for each amidation. This Salmonella arizonae (strain ATCC BAA-731 / CDC346-86 / RSK2980) protein is Cobyric acid synthase.